The sequence spans 116 residues: Early 4 ORF3 protein (116 aa).

The protein belongs to the adenoviridae E4 ORF3 family. Homodimer. Multimerizes through C-terminus tail by reciprocal or nonreciprocal interactions. Interacts with host PML isoform 2 C-terminal disordered region. Interacts with E1B-55k; this interaction is necessary for E1B 55 kDa protein to localize to the nuclear matrix fraction of the cell. May interact with host TRIM24, CREBBP, EP300, PRKDC and the MRN complex MRE11/RAD50/NBS1; these interactions may happen through nuclear bodies complexes.

Its subcellular location is the host nucleus. Functionally, forms a multivalent network in host nucleus that inhibits nuclear bodies and prevents antiviral cellular activities. The network is made of multimerized dimers and surrounds adenovirus replication centers and nucleolus. Plays a role in splicing of the major late transcript. Prevents viral genome concatemer formation. The chain is Early 4 ORF3 protein from Human adenovirus C serotype 2 (HAdV-2).